The sequence spans 156 residues: Cellulose synthase operon protein D (156 aa).

Its pathway is glycan metabolism; bacterial cellulose biosynthesis. May have a major role in the perfection of crystallization, involved either in the pore structure itself or in the organization of the pores within the linear array of terminal synthesizing complexes (TCs). This is Cellulose synthase operon protein D from Komagataeibacter xylinus (Gluconacetobacter xylinus).